Here is a 153-residue protein sequence, read N- to C-terminus: Peptidyl-prolyl cis-trans isomerase FKBP15-1 (153 aa).

Positions 1–25 (MMSSASAMKAVGFLLLLTILTLAYA) are cleaved as a signal peptide. Residues 52 to 140 (GDKIKVHYRG…IFDTELVAVN (89 aa)) enclose the PPIase FKBP-type domain. Residues 150 to 153 (KNEL) carry the Prevents secretion from ER motif.

Belongs to the FKBP-type PPIase family.

The protein localises to the endoplasmic reticulum lumen. The catalysed reaction is [protein]-peptidylproline (omega=180) = [protein]-peptidylproline (omega=0). Functionally, PPIases accelerate the folding of proteins. It catalyzes the cis-trans isomerization of proline imidic peptide bonds in oligopeptides. The polypeptide is Peptidyl-prolyl cis-trans isomerase FKBP15-1 (FKBP15-1) (Arabidopsis thaliana (Mouse-ear cress)).